We begin with the raw amino-acid sequence, 347 residues long: NADH-ubiquinone oxidoreductase chain 2 (347 aa).

The next 11 membrane-spanning stretches (helical) occupy residues 5–22 (ILIT…IVLF), 26–45 (WFMI…PILM), 60–80 (FLTQ…NLLC), 96–116 (TMIT…FWVP), 122–142 (ISLS…LSIL), 153–173 (LLLM…LNQT), 178–198 (ILAY…VYNP), 200–220 (LAIL…MLFM), 237–257 (FPLM…LPPL), 274–294 (DMII…YFYT), and 325–345 (LLAP…MLAA).

This sequence belongs to the complex I subunit 2 family. Core subunit of respiratory chain NADH dehydrogenase (Complex I) which is composed of 45 different subunits. Interacts with TMEM242.

It is found in the mitochondrion inner membrane. The catalysed reaction is a ubiquinone + NADH + 5 H(+)(in) = a ubiquinol + NAD(+) + 4 H(+)(out). Core subunit of the mitochondrial membrane respiratory chain NADH dehydrogenase (Complex I) which catalyzes electron transfer from NADH through the respiratory chain, using ubiquinone as an electron acceptor. Essential for the catalytic activity and assembly of complex I. This chain is NADH-ubiquinone oxidoreductase chain 2, found in Ailuropoda melanoleuca (Giant panda).